The primary structure comprises 358 residues: MAGCGEIDHSINMLPTNRKANESCSNTAPSLTVPECAICLQTCVHPVSLPCKHVFCYLCVKGASWLGKRCALCRQEIPEDFLDKPTLLSPEELKAASRGNGEYAWYYEGRNGWWQYGERTSRELEDAFSKGKKNTEMLIAGFLYVADLENMVQYRRNEHGRRRKIKRDIIDIPKKGVAGLRLDCDANTVNLARESSADGADSVSAQSGASVQPLVSSVRPLTSVDGQLTSPATPSPDASTSLEDSFAHLQLSGDNTAERSHRGEGEEDHESPSSGRVPAPDTSIEETESDASSDSEDVSAVVAQHSLTQQRLLVSNANQTVPDRSDRSGTDRSVAGGGTVSVSVRSRRPDGQCTVTEV.

An RING-type zinc finger spans residues 36–74; the sequence is CAICLQTCVHPVSLPCKHVFCYLCVKGASWLGKRCALCR. Residues K84 and K94 each participate in a glycyl lysine isopeptide (Lys-Gly) (interchain with G-Cter in ubiquitin) cross-link. One can recognise a WWE domain in the interval 91–167; it reads EELKAASRGN…EHGRRRKIKR (77 aa). Residues Y107, R110, and W114 each contribute to the a glycoprotein site. Residue K130 forms a Glycyl lysine isopeptide (Lys-Gly) (interchain with G-Cter in ubiquitin) linkage. A glycoprotein-binding residues include Y144, Q153, R163, and K175. K175 is covalently cross-linked (Glycyl lysine isopeptide (Lys-Gly) (interchain with G-Cter in ubiquitin)). Residues 253–358 form a disordered region; sequence GDNTAERSHR…PDGQCTVTEV (106 aa). Positions 283-297 are enriched in acidic residues; the sequence is SIEETESDASSDSED. S289 and S293 each carry phosphoserine. A compositionally biased stretch (polar residues) spans 305–322; the sequence is HSLTQQRLLVSNANQTVP.

As to quaternary structure, can form homooligomers. Interacts with PARsylated AXIN1, AXIN2, BLZF1, CASC3, H1-2, IPO7, LIG3, NCL, PARP1, XRCC1, XRCC5 and XRCC6. Interacts with DDB1, DHX15, IQGAP1, LRPPRC, PARP2, PRKDC, RUVBL2, TNKS1 and TNKS2. Binding often leads to interactor ubiquitination, in the presence of the appropriate E1 and E2 enzymes, and proteasomal degradation. Post-translationally, ubiquitinated; autoubiquitinated. Autoubiquitination is enhanced upon poly(ADP-ribose)-binding.

It localises to the cytoplasm. The protein resides in the cytosol. Its subcellular location is the nucleus. It catalyses the reaction S-ubiquitinyl-[E2 ubiquitin-conjugating enzyme]-L-cysteine + [acceptor protein]-L-lysine = [E2 ubiquitin-conjugating enzyme]-L-cysteine + N(6)-ubiquitinyl-[acceptor protein]-L-lysine.. The protein operates within protein modification; protein ubiquitination. E3 ubiquitin-protein ligase that specifically binds poly-ADP-ribosylated (PARsylated) proteins and mediates their ubiquitination and subsequent degradation. May regulate many important biological processes, such as cell survival and DNA damage response. Acts as an activator of the Wnt signaling pathway by mediating the ubiquitination of PARsylated AXIN1 and AXIN2, 2 key components of the beta-catenin destruction complex. Acts in cooperation with tankyrase proteins (TNKS and TNKS2), which mediate PARsylation of target proteins AXIN1, AXIN2, BLZF1, CASC3, TNKS and TNKS2. Recognizes and binds tankyrase-dependent PARsylated proteins via its WWE domain and mediates their ubiquitination, leading to their degradation. Different ubiquitin linkage types have been observed: TNKS2 undergoes ubiquitination at 'Lys-48' and 'Lys-63', while AXIN1 is only ubiquitinated at 'Lys-48'. May regulate TNKS and TNKS2 subcellular location, preventing aggregation at a centrosomal location. Neuroprotective protein. Protects the brain against N-methyl-D-aspartate (NMDA) receptor-mediated glutamate excitotoxicity and ischemia, by interfering with PAR-induced cell death, called parthanatos. Prevents nuclear translocation of AIFM1 in a PAR-binding dependent manner. Does not affect PARP1 activation. Protects against cell death induced by DNA damaging agents, such as N-methyl-N-nitro-N-nitrosoguanidine (MNNG) and rescues cells from G1 arrest. Promotes cell survival after gamma-irradiation. Facilitates DNA repair. The polypeptide is E3 ubiquitin-protein ligase RNF146 (RNF146) (Pongo abelii (Sumatran orangutan)).